Consider the following 359-residue polypeptide: Peptide chain release factor 1 (359 aa).

Position 236 is an N5-methylglutamine (Gln236).

Belongs to the prokaryotic/mitochondrial release factor family. Methylated by PrmC. Methylation increases the termination efficiency of RF1.

It localises to the cytoplasm. Its function is as follows. Peptide chain release factor 1 directs the termination of translation in response to the peptide chain termination codons UAG and UAA. This chain is Peptide chain release factor 1, found in Malacoplasma penetrans (strain HF-2) (Mycoplasma penetrans).